Here is a 1407-residue protein sequence, read N- to C-terminus: DNA-directed RNA polymerase subunit beta' (1407 aa).

Residues Cys70, Cys72, Cys85, and Cys88 each coordinate Zn(2+). Positions 460, 462, and 464 each coordinate Mg(2+). The Zn(2+) site is built by Cys814, Cys888, Cys895, and Cys898.

It belongs to the RNA polymerase beta' chain family. In terms of assembly, the RNAP catalytic core consists of 2 alpha, 1 beta, 1 beta' and 1 omega subunit. When a sigma factor is associated with the core the holoenzyme is formed, which can initiate transcription. Mg(2+) serves as cofactor. The cofactor is Zn(2+).

It carries out the reaction RNA(n) + a ribonucleoside 5'-triphosphate = RNA(n+1) + diphosphate. Its function is as follows. DNA-dependent RNA polymerase catalyzes the transcription of DNA into RNA using the four ribonucleoside triphosphates as substrates. The protein is DNA-directed RNA polymerase subunit beta' of Salmonella choleraesuis (strain SC-B67).